The primary structure comprises 670 residues: MYIVNLILPLIGSIITGIFGHKLGNRISIKIAVGCMMLTAISSLYIGYEILLCNSVVHFKLGTWMQVGSLNVEYGLLYDSLTSIMIIVITCISSMVHLYSMDYMKEDPHKTRFFSYLSLFTFFMMLLVTADNFVQLFFGWEGVGIMSYLLINFWYTRLQANKSALKAVILNRFGDFGLFFGILLVFLVFKSVDFSVIFTIAPFITEYTINLLGYEVNAITLIGSFIVIGVVGKSAQLGLHMWLPDAMEGPTPVSALLHAATMVTAGVFLVLRTSPLLSYSITILNILTIIGALTTLFATTIGIVQNDIKRVIAYSTCSQLGYMIFACGLLNYNASIYHLTTHAFFKALLFLSAGSVIHGLNDEQDMRKMGGLVNLMPLTYQCMLIGTLALTGFPFLSGYYSKDIILETSYATYYWEGTFAAIIGYVAAFGTTFYSFRLLILTFFNKPRMQYKTIAGVHEASTNMVIPLVILALCSIFIGYVTKDFFVGLGTPVWNNSFFAYPYNNLILESEVLQRELKLLPLFAFIYGVITPVLFYFNIKEDRMINVKQNLMVKESYFFFVKKWYFDFLSRVLIVVPFFHLSYDVMNKNLDKGLWEKIGVTGVATTLVTAFTALKLKNEITLSTYISYIVQTIILIIVVGIFSFMTGFIYMELCIIIGILYICLPSIKID.

The next 19 membrane-spanning stretches (helical) occupy residues 1 to 21, 31 to 51, 81 to 101, 111 to 131, 133 to 153, 178 to 198, 211 to 231, 251 to 271, 283 to 303, 311 to 331, 339 to 359, 375 to 395, 421 to 441, 462 to 482, 519 to 539, 566 to 586, 594 to 614, 629 to 649, and 650 to 670; these read MYIV…IFGH, IAVG…YEIL, LTSI…LYSM, TRFF…VTAD, FVQL…LINF, LFFG…SVIF, LLGY…IGVV, TPVS…FLVL, ILNI…TIGI, VIAY…GLLN, LTTH…VIHG, LMPL…GFPF, AIIG…LLIL, TNMV…GYVT, LLPL…YFNI, FDFL…YDVM, LWEK…FTAL, IVQT…TGFI, and YMEL…IKID.

It belongs to the complex I subunit 5 family.

It is found in the mitochondrion inner membrane. It catalyses the reaction a ubiquinone + NADH + 5 H(+)(in) = a ubiquinol + NAD(+) + 4 H(+)(out). Functionally, core subunit of the mitochondrial membrane respiratory chain NADH dehydrogenase (Complex I) that is believed to belong to the minimal assembly required for catalysis. Complex I functions in the transfer of electrons from NADH to the respiratory chain. The immediate electron acceptor for the enzyme is believed to be ubiquinone. The polypeptide is NADH-ubiquinone oxidoreductase chain 5 (nad5) (Dictyostelium discoideum (Social amoeba)).